Here is a 262-residue protein sequence, read N- to C-terminus: Small ribosomal subunit protein uS2 (262 aa).

Residues 224–246 form a disordered region; the sequence is GNQGEDQDDAQEQQVAADKKADS.

This sequence belongs to the universal ribosomal protein uS2 family.

The chain is Small ribosomal subunit protein uS2 from Lacticaseibacillus casei (strain BL23) (Lactobacillus casei).